Reading from the N-terminus, the 202-residue chain is Imidazoleglycerol-phosphate dehydratase (202 aa).

It belongs to the imidazoleglycerol-phosphate dehydratase family.

It localises to the cytoplasm. The catalysed reaction is D-erythro-1-(imidazol-4-yl)glycerol 3-phosphate = 3-(imidazol-4-yl)-2-oxopropyl phosphate + H2O. Its pathway is amino-acid biosynthesis; L-histidine biosynthesis; L-histidine from 5-phospho-alpha-D-ribose 1-diphosphate: step 6/9. In Mycolicibacterium gilvum (strain PYR-GCK) (Mycobacterium gilvum (strain PYR-GCK)), this protein is Imidazoleglycerol-phosphate dehydratase.